The following is a 206-amino-acid chain: Cytochrome c oxidase subunit 3 (206 aa).

The next 5 helical transmembrane spans lie at 26-46 (FLGF…FFGT), 68-88 (LVFI…LAMF), 97-117 (AMMI…GFEI), 143-163 (LVGL…VLLI), and 185-205 (WHFI…MGVG).

It belongs to the cytochrome c oxidase subunit 3 family.

The protein resides in the cell membrane. It catalyses the reaction 4 Fe(II)-[cytochrome c] + O2 + 8 H(+)(in) = 4 Fe(III)-[cytochrome c] + 2 H2O + 4 H(+)(out). This chain is Cytochrome c oxidase subunit 3 (ctaE), found in Alkalihalophilus pseudofirmus (strain ATCC BAA-2126 / JCM 17055 / OF4) (Bacillus pseudofirmus).